Here is a 383-residue protein sequence, read N- to C-terminus: D-alanine--D-alanine ligase (383 aa).

Residues 164 to 373 enclose the ATP-grasp domain; it reads KLAFQAAGLE…YSALIDELIT (210 aa). An ATP-binding site is contributed by 196-251; that stretch reads VAELGFPVFVKPARAGSSFGITRVDEPSQLDAAIATAREHDLKLVVEAGIDGREIE. Mg(2+) contacts are provided by Asp-327, Glu-340, and Asn-342.

This sequence belongs to the D-alanine--D-alanine ligase family. The cofactor is Mg(2+). Mn(2+) is required as a cofactor.

The protein resides in the cytoplasm. The enzyme catalyses 2 D-alanine + ATP = D-alanyl-D-alanine + ADP + phosphate + H(+). It functions in the pathway cell wall biogenesis; peptidoglycan biosynthesis. Functionally, cell wall formation. The chain is D-alanine--D-alanine ligase from Kocuria rhizophila (strain ATCC 9341 / DSM 348 / NBRC 103217 / DC2201).